The sequence spans 680 residues: DNA-directed RNA polymerase subunit beta' (680 aa).

Positions 69, 71, 87, and 90 each coordinate Zn(2+). Mg(2+)-binding residues include D489, D491, and D493.

It belongs to the RNA polymerase beta' chain family. RpoC1 subfamily. In plastids the minimal PEP RNA polymerase catalytic core is composed of four subunits: alpha, beta, beta', and beta''. When a (nuclear-encoded) sigma factor is associated with the core the holoenzyme is formed, which can initiate transcription. Requires Mg(2+) as cofactor. Zn(2+) is required as a cofactor.

The protein localises to the plastid. It localises to the chloroplast. It carries out the reaction RNA(n) + a ribonucleoside 5'-triphosphate = RNA(n+1) + diphosphate. In terms of biological role, DNA-dependent RNA polymerase catalyzes the transcription of DNA into RNA using the four ribonucleoside triphosphates as substrates. This is DNA-directed RNA polymerase subunit beta' from Manihot esculenta (Cassava).